Consider the following 556-residue polypeptide: Single-strand DNA-binding protein (556 aa).

Disordered regions lie at residues 1–95 (MDPK…SEVE) and 527–556 (FVRPEPALPPISDSRRTYESRPRGPTVNSL). Composition is skewed to polar residues over residues 10–25 (ENITETAAGNVETSDF) and 36–51 (VNSTGMSEIDMTGSQE). Basic and acidic residues-rich tracts occupy residues 52–73 (TPEHNMHGSPTHTDDLGPRLDA) and 539–548 (DSRRTYESRP).

In terms of assembly, interacts with host VIP2 that promotes T-DNA integration into the host genome. Forms a complex made of virE2 and host proteins VIP1 and VBF. Forms heterodimers with the chaperone protein virE1 that prevent virE2 anarchic homopolymerization. Interacts with A.thaliana VIP1 that mediates its translocation to the host nucleus. Forms a complex made of VirE2, host VIP1 and VIP2 and single-stranded DNA (ssDNA).

Its subcellular location is the secreted. The protein localises to the host nucleus. In terms of biological role, involved in DNA transformation; mediates the nuclear uptake of single-stranded DNA copies of the transferred DNA (T-DNA) element. Binds single-stranded but not double-stranded DNA regardless of nucleotide sequence composition. The protein is Single-strand DNA-binding protein (virE2) of Agrobacterium fabrum (strain C58 / ATCC 33970) (Agrobacterium tumefaciens (strain C58)).